A 565-amino-acid chain; its full sequence is NAD-dependent malic enzyme (565 aa).

The active-site Proton donor is the Tyr104. Arg157 contributes to the NAD(+) binding site. The Proton acceptor role is filled by Lys175. A divalent metal cation is bound by residues Glu246, Asp247, and Asp270. 2 residues coordinate NAD(+): Asp270 and Asn418.

It belongs to the malic enzymes family. As to quaternary structure, homotetramer. It depends on Mg(2+) as a cofactor. Requires Mn(2+) as cofactor.

The catalysed reaction is (S)-malate + NAD(+) = pyruvate + CO2 + NADH. It catalyses the reaction oxaloacetate + H(+) = pyruvate + CO2. The sequence is that of NAD-dependent malic enzyme from Klebsiella pneumoniae subsp. pneumoniae (strain ATCC 700721 / MGH 78578).